The primary structure comprises 164 residues: Translation initiation factor IF-3 (164 aa).

Belongs to the IF-3 family. As to quaternary structure, monomer.

Its subcellular location is the cytoplasm. IF-3 binds to the 30S ribosomal subunit and shifts the equilibrium between 70S ribosomes and their 50S and 30S subunits in favor of the free subunits, thus enhancing the availability of 30S subunits on which protein synthesis initiation begins. The sequence is that of Translation initiation factor IF-3 from Bordetella bronchiseptica (strain ATCC BAA-588 / NCTC 13252 / RB50) (Alcaligenes bronchisepticus).